A 566-amino-acid chain; its full sequence is Oxygen-dependent choline dehydrogenase (566 aa).

Residue Asp-7–Glu-36 participates in FAD binding. Positions Asn-180 to Ser-202 are disordered. His-474 acts as the Proton acceptor in catalysis.

This sequence belongs to the GMC oxidoreductase family. FAD serves as cofactor.

It carries out the reaction choline + A = betaine aldehyde + AH2. The enzyme catalyses betaine aldehyde + NAD(+) + H2O = glycine betaine + NADH + 2 H(+). It functions in the pathway amine and polyamine biosynthesis; betaine biosynthesis via choline pathway; betaine aldehyde from choline (cytochrome c reductase route): step 1/1. Its function is as follows. Involved in the biosynthesis of the osmoprotectant glycine betaine. Catalyzes the oxidation of choline to betaine aldehyde and betaine aldehyde to glycine betaine at the same rate. In Burkholderia orbicola (strain MC0-3), this protein is Oxygen-dependent choline dehydrogenase.